Reading from the N-terminus, the 81-residue chain is Cytotoxin 2 (81 aa).

The N-terminal stretch at 1 to 21 (MKTLLLTLVVVTIVCLDLGYT) is a signal peptide. 4 cysteine pairs are disulfide-bonded: cysteine 24/cysteine 42, cysteine 35/cysteine 59, cysteine 63/cysteine 74, and cysteine 75/cysteine 80.

This sequence belongs to the three-finger toxin family. Short-chain subfamily. Type IA cytotoxin sub-subfamily. Monomer in solution; Homodimer and oligomer in the presence of negatively charged lipids forming a pore with a size ranging between 20 and 30 Angstroms. Expressed by the venom gland.

Its subcellular location is the secreted. It localises to the target cell membrane. Its function is as follows. Basic protein that binds to cell membrane and depolarizes cardiomyocytes. It also shows lytic activities, but 2-fold less important than that of CTX-A4. It binds to the integrin alpha-V/beta-3 (ITGAV/ITGB3) with a moderate affinity. It may interact with sulfatides in the cell membrane which induces pore formation and cell internalization and is responsible for cytotoxicity in cardiomyocytes. It may also target the mitochondrial membrane and induce mitochondrial swelling and fragmentation. The protein is Cytotoxin 2 of Naja atra (Chinese cobra).